A 123-amino-acid chain; its full sequence is Histone H2B (123 aa).

Residues M1–R31 are disordered. The segment covering G9–R31 has biased composition (basic residues). O-linked (GlcNAc) serine glycosylation is present at S110. K118 participates in a covalent cross-link: Glycyl lysine isopeptide (Lys-Gly) (interchain with G-Cter in ubiquitin).

This sequence belongs to the histone H2B family. As to quaternary structure, the nucleosome is a histone octamer containing two molecules each of H2A, H2B, H3 and H4 assembled in one H3-H4 heterotetramer and two H2A-H2B heterodimers. The octamer wraps approximately 147 bp of DNA. In terms of processing, monoubiquitination of Lys-118 gives a specific tag for epigenetic transcriptional activation and is also prerequisite for histone H3 'Lys-4' and 'Lys-79' methylation. GlcNAcylation at Ser-110 promotes monoubiquitination of Lys-118. It fluctuates in response to extracellular glucose, and associates with transcribed genes.

Its subcellular location is the nucleus. It is found in the chromosome. Its function is as follows. Core component of nucleosome. Nucleosomes wrap and compact DNA into chromatin, limiting DNA accessibility to the cellular machineries which require DNA as a template. Histones thereby play a central role in transcription regulation, DNA repair, DNA replication and chromosomal stability. DNA accessibility is regulated via a complex set of post-translational modifications of histones, also called histone code, and nucleosome remodeling. This Platynereis dumerilii (Dumeril's clam worm) protein is Histone H2B.